Reading from the N-terminus, the 992-residue chain is UvrABC system protein A (992 aa).

A compositionally biased stretch (polar residues) spans 1–11; the sequence is MPKNSSTTVSS. The disordered stretch occupies residues 1–30; the sequence is MPKNSSTTVSSAVEAHAGGLASGPGGARSG. Residue 62–69 participates in ATP binding; it reads GLSGSGKS. The C4-type; atypical zinc-finger motif lies at 302–330; that stretch reads CPNGHEQTVDEIEPRSFSFNNPFGACPEC. ABC transporter domains lie at 360-639 and 659-988; these read WSLG…TRSV and PEKG…RFLA. Residue 692–699 coordinates ATP; the sequence is GVSGSGKS. A C4-type zinc finger spans residues 791-817; sequence CEACAGDGTLKIEMNFLPDVYVPCEVC.

It belongs to the ABC transporter superfamily. UvrA family. In terms of assembly, forms a heterotetramer with UvrB during the search for lesions.

The protein resides in the cytoplasm. Functionally, the UvrABC repair system catalyzes the recognition and processing of DNA lesions. UvrA is an ATPase and a DNA-binding protein. A damage recognition complex composed of 2 UvrA and 2 UvrB subunits scans DNA for abnormalities. When the presence of a lesion has been verified by UvrB, the UvrA molecules dissociate. The polypeptide is UvrABC system protein A (Micrococcus luteus (Micrococcus lysodeikticus)).